Reading from the N-terminus, the 338-residue chain is UDP-3-O-acylglucosamine N-acyltransferase (338 aa).

Residue H239 is the Proton acceptor of the active site.

This sequence belongs to the transferase hexapeptide repeat family. LpxD subfamily. In terms of assembly, homotrimer.

It catalyses the reaction a UDP-3-O-[(3R)-3-hydroxyacyl]-alpha-D-glucosamine + a (3R)-hydroxyacyl-[ACP] = a UDP-2-N,3-O-bis[(3R)-3-hydroxyacyl]-alpha-D-glucosamine + holo-[ACP] + H(+). Its pathway is bacterial outer membrane biogenesis; LPS lipid A biosynthesis. Its function is as follows. Catalyzes the N-acylation of UDP-3-O-acylglucosamine using 3-hydroxyacyl-ACP as the acyl donor. Is involved in the biosynthesis of lipid A, a phosphorylated glycolipid that anchors the lipopolysaccharide to the outer membrane of the cell. In Thermosynechococcus vestitus (strain NIES-2133 / IAM M-273 / BP-1), this protein is UDP-3-O-acylglucosamine N-acyltransferase.